Here is a 614-residue protein sequence, read N- to C-terminus: Zinc metalloproteinase-disintegrin-like BmMP (614 aa).

Positions 1 to 20 are cleaved as a signal peptide; sequence MIQALLVTICLAVFPYQGSS. A propeptide spanning residues 21 to 188 is cleaved from the precursor; it reads IILESGNVND…WESDEPIRNA (168 aa). A glycan (N-linked (GlcNAc...) asparagine) is linked at N187. The region spanning 205–401 is the Peptidase M12B domain; it reads KYIEFYVAVD…DRPQCILNKP (197 aa). Intrachain disulfides connect C316/C396, C356/C380, C359/C364, C412/C441, C423/C436, C425/C431, C435/C458, C449/C455, C454/C480, C467/C487, C474/C506, C499/C511, C518/C568, C533/C576, C546/C556, C563/C602, and C596/C607. Position 341 (H341) interacts with Zn(2+). E342 is a catalytic residue. H345 and H351 together coordinate Zn(2+). Residues 409 to 495 enclose the Disintegrin domain; that stretch reads PAICGNYFVE…ECPTDIFRRN (87 aa). The short motif at 473 to 475 is the D/ECD-tripeptide element; sequence DCD.

The protein belongs to the venom metalloproteinase (M12B) family. P-III subfamily. P-IIIa sub-subfamily. As to quaternary structure, monomer. Zn(2+) serves as cofactor. Expressed by the venom gland.

It is found in the secreted. Snake venom zinc metalloproteinase that inhibits platelet aggregation and degrades fibrinogen. This is Zinc metalloproteinase-disintegrin-like BmMP from Bungarus multicinctus (Many-banded krait).